A 773-amino-acid polypeptide reads, in one-letter code: Cytochrome c oxidase subunit 1+2 (773 aa).

The tract at residues 1-491 (MKLLEIYDKQ…LIASYGSLIT (491 aa)) is COX1. The helical transmembrane segment at 41–61 (TMYITFSIFAGIIGTLLSLVI) threads the bilayer. Residue Glu64 participates in Ca(2+) binding. His85 provides a ligand contact to Fe(II)-heme a. 6 helical membrane-spanning segments follow: residues 87–111 (LIMI…NWFL), 130–150 (LWLI…GIGA), 173–193 (VGIL…INFL), 211–231 (LFVW…PVLA), 262–278 (LFHP…FGII), and 290–310 (IFGV…GFLV). His264 serves as a coordination point for Cu cation. Residues 264–268 (HPEVY) constitute a cross-link (1'-histidyl-3'-tyrosine (His-Tyr)). Tyr268 contacts O2. 2 residues coordinate Cu cation: His314 and His315. 2 helical membrane-spanning segments follow: residues 335-355 (IIAI…WGGV) and 362-382 (MLFV…GVVL). Mg(2+)-binding residues include His392 and Asp393. 5 helical membrane passes run 396 to 416 (YVVA…IFAG), 444 to 464 (FWTM…LGLA), 483 to 503 (IASY…VNIF), 555 to 575 (IFFY…RILW), and 604 to 624 (GTVI…LIAI). His400 serves as a coordination point for heme a3. His402 is a Fe(II)-heme a binding site. The interval 492 to 773 (AFGLLFFFVN…VQEYLGRLYK (282 aa)) is COX2. Cu cation is bound by residues His709, Cys744, Cys748, and His752.

The protein in the N-terminal section; belongs to the heme-copper respiratory oxidase family. In the C-terminal section; belongs to the cytochrome c oxidase subunit 2 family. In terms of assembly, component of the cytochrome c oxidase (complex IV, CIV), a multisubunit enzyme composed of a catalytic core of 3 subunits and several supernumerary subunits. The complex exists as a monomer or a dimer and forms supercomplexes (SCs) in the inner mitochondrial membrane with ubiquinol-cytochrome c oxidoreductase (cytochrome b-c1 complex, complex III, CIII). It depends on heme as a cofactor. The cofactor is Cu cation.

It is found in the mitochondrion inner membrane. It carries out the reaction 4 Fe(II)-[cytochrome c] + O2 + 8 H(+)(in) = 4 Fe(III)-[cytochrome c] + 2 H2O + 4 H(+)(out). It functions in the pathway energy metabolism; oxidative phosphorylation. Its function is as follows. Component of the cytochrome c oxidase, the last enzyme in the mitochondrial electron transport chain which drives oxidative phosphorylation. The respiratory chain contains 3 multisubunit complexes succinate dehydrogenase (complex II, CII), ubiquinol-cytochrome c oxidoreductase (cytochrome b-c1 complex, complex III, CIII) and cytochrome c oxidase (complex IV, CIV), that cooperate to transfer electrons derived from NADH and succinate to molecular oxygen, creating an electrochemical gradient over the inner membrane that drives transmembrane transport and the ATP synthase. Cytochrome c oxidase is the component of the respiratory chain that catalyzes the reduction of oxygen to water. Electrons originating from reduced cytochrome c in the intermembrane space (IMS) are transferred via the dinuclear copper A center (CU(A)) of subunit 2 and heme A of subunit 1 to the active site in subunit 1, a binuclear center (BNC) formed by heme A3 and copper B (CU(B)). The BNC reduces molecular oxygen to 2 water molecules using 4 electrons from cytochrome c in the IMS and 4 protons from the mitochondrial matrix. In Dictyostelium citrinum (Slime mold), this protein is Cytochrome c oxidase subunit 1+2 (cox1/2).